We begin with the raw amino-acid sequence, 335 residues long: Cytoskeleton protein RodZ (335 aa).

At 1-111 (MNTEATHDQN…LGKRRKKRDG (111 aa)) the chain is on the cytoplasmic side. One can recognise an HTH cro/C1-type domain in the interval 19-71 (LRNAREQLGLSQQAVAERLCLKVSTVRDIEEDKAPADLASTFLRGYIRSYARL). Positions 30–49 (QQAVAERLCLKVSTVRDIEE) form a DNA-binding region, H-T-H motif. Residues 112–132 (WLMTFTWLVLFVVIGLSGAWW) traverse the membrane as a helical; Signal-anchor for type II membrane protein segment. The Periplasmic portion of the chain corresponds to 133 to 335 (WQDHKAQQEE…TLNAEQSPAQ (203 aa)). Residues 148–164 (DQSSAELNNNQSQSVPL) are compositionally biased toward polar residues. Residues 148 to 244 (DQSSAELNNN…PLPTDQAGVT (97 aa)) form a disordered region. 2 stretches are compositionally biased toward low complexity: residues 165–205 (DTST…DPQQ) and 217–239 (DTAA…LPTD).

The protein belongs to the RodZ family.

The protein localises to the cell inner membrane. Cytoskeletal protein that is involved in cell-shape control through regulation of the length of the long axis. This Escherichia coli O6:H1 (strain CFT073 / ATCC 700928 / UPEC) protein is Cytoskeleton protein RodZ.